A 216-amino-acid chain; its full sequence is Cyclo(L-leucyl-L-leucyl) synthase (216 aa).

The active-site Nucleophile is the S14. Substrate-binding positions include N17, 155–159 (YIFDE), and Y179.

This sequence belongs to the CDPS family.

It carries out the reaction 2 L-leucyl-tRNA(Leu) = cyclo(L-leucyl-L-leucyl) + 2 tRNA(Leu) + 2 H(+). Functionally, it uses activated amino acids in the form of aminoacyl-tRNAs (aa-tRNAs) as substrates to catalyze the ATP-independent formation of cyclodipeptides which are intermediates in diketopiperazine (DKP) biosynthetic pathways. Catalyzes the formation of cyclo(L-Leu-L-Leu) (cLL) from L-leucyl-tRNA(Leu). Can incorporate various nonpolar residues, such as L-leucine and L-methionine, into cyclodipeptides. This is Cyclo(L-leucyl-L-leucyl) synthase from Corynebacterium jeikeium (strain K411).